The primary structure comprises 404 residues: Immediate early response gene 5-like protein (404 aa).

Disordered regions lie at residues 86 to 107 (AADFGPLQLGGGGDAEAREPAA), 160 to 231 (AALQ…APAS), and 308 to 327 (QEEEEDDEEDAGGLGAEPPG). Over residues 177-194 (PLQPGPAPLPLPLPPPAP) the composition is skewed to pro residues. Positions 195–231 (AALCPRDPRAPAACSAPPGAAPPAAAASPPASPAPAS) are enriched in low complexity. The segment covering 308 to 318 (QEEEEDDEEDA) has biased composition (acidic residues).

Belongs to the IER family.

This chain is Immediate early response gene 5-like protein (IER5L), found in Homo sapiens (Human).